The following is a 739-amino-acid chain: Protein kinase C (739 aa).

Positions 1-117 (MFTGKLQIKV…SETAVQDLWV (117 aa)) constitute a C2 domain. 2 Phorbol-ester/DAG-type zinc fingers span residues 176-226 (GHKF…VSKC) and 251-301 (PHRF…ANTC). Residues 408–665 (FNFIKVLGKG…ENEIRKHPFF (258 aa)) enclose the Protein kinase domain. ATP contacts are provided by residues 414–422 (LGKGSFGKV) and Lys437. Residue Asp532 is the Proton acceptor of the active site. One can recognise an AGC-kinase C-terminal domain in the interval 666–737 (AKLDWKELEK…VNPKFGPERK (72 aa)).

It belongs to the protein kinase superfamily. AGC Ser/Thr protein kinase family. PKC subfamily.

It catalyses the reaction L-seryl-[protein] + ATP = O-phospho-L-seryl-[protein] + ADP + H(+). The enzyme catalyses L-threonyl-[protein] + ATP = O-phospho-L-threonyl-[protein] + ADP + H(+). Its function is as follows. PKC is activated by diacylglycerol which in turn phosphorylates a range of cellular proteins. PKC also serves as the receptor for phorbol esters, a class of tumor promoters. The protein is Protein kinase C (Pkc98E) of Drosophila melanogaster (Fruit fly).